We begin with the raw amino-acid sequence, 541 residues long: Chaperonin GroEL (541 aa).

ATP-binding positions include 29-32 (TLGP), 86-90 (DGTTT), Gly-413, 477-479 (DAL), and Asp-493.

The protein belongs to the chaperonin (HSP60) family. In terms of assembly, forms a cylinder of 14 subunits composed of two heptameric rings stacked back-to-back. Interacts with the co-chaperonin GroES.

It localises to the cytoplasm. The enzyme catalyses ATP + H2O + a folded polypeptide = ADP + phosphate + an unfolded polypeptide.. Functionally, together with its co-chaperonin GroES, plays an essential role in assisting protein folding. The GroEL-GroES system forms a nano-cage that allows encapsulation of the non-native substrate proteins and provides a physical environment optimized to promote and accelerate protein folding. In Clostridium botulinum (strain ATCC 19397 / Type A), this protein is Chaperonin GroEL.